We begin with the raw amino-acid sequence, 207 residues long: FMN-dependent NADH:quinone oxidoreductase 1 (207 aa).

FMN contacts are provided by residues Ser-9, 15 to 17 (SIS), and 139 to 142 (TRGG).

The protein belongs to the azoreductase type 1 family. Homodimer. It depends on FMN as a cofactor.

It catalyses the reaction 2 a quinone + NADH + H(+) = 2 a 1,4-benzosemiquinone + NAD(+). It carries out the reaction N,N-dimethyl-1,4-phenylenediamine + anthranilate + 2 NAD(+) = 2-(4-dimethylaminophenyl)diazenylbenzoate + 2 NADH + 2 H(+). In terms of biological role, quinone reductase that provides resistance to thiol-specific stress caused by electrophilic quinones. Its function is as follows. Also exhibits azoreductase activity. Catalyzes the reductive cleavage of the azo bond in aromatic azo compounds to the corresponding amines. This Trichormus variabilis (strain ATCC 29413 / PCC 7937) (Anabaena variabilis) protein is FMN-dependent NADH:quinone oxidoreductase 1.